The following is a 442-amino-acid chain: tRNA pseudouridine(38/39) synthase (442 aa).

Catalysis depends on aspartate 151, which acts as the Nucleophile. Residue tyrosine 222 participates in substrate binding.

It belongs to the tRNA pseudouridine synthase TruA family.

The protein resides in the nucleus. It catalyses the reaction uridine(38/39) in tRNA = pseudouridine(38/39) in tRNA. Formation of pseudouridines at positions 38 and 39 in the anticodon stem and loop of transfer RNAs. The chain is tRNA pseudouridine(38/39) synthase (DEG1) from Saccharomyces cerevisiae (strain ATCC 204508 / S288c) (Baker's yeast).